A 213-amino-acid polypeptide reads, in one-letter code: Orotate phosphoribosyltransferase (213 aa).

K26 is a binding site for 5-phospho-alpha-D-ribose 1-diphosphate. 34 to 35 is an orotate binding site; it reads FF. 5-phospho-alpha-D-ribose 1-diphosphate is bound by residues 72–73, R99, K100, K103, H105, and 124–132; these read YK and DDVITAGTA. The orotate site is built by T128 and R156.

The protein belongs to the purine/pyrimidine phosphoribosyltransferase family. PyrE subfamily. In terms of assembly, homodimer. It depends on Mg(2+) as a cofactor.

The enzyme catalyses orotidine 5'-phosphate + diphosphate = orotate + 5-phospho-alpha-D-ribose 1-diphosphate. It participates in pyrimidine metabolism; UMP biosynthesis via de novo pathway; UMP from orotate: step 1/2. Catalyzes the transfer of a ribosyl phosphate group from 5-phosphoribose 1-diphosphate to orotate, leading to the formation of orotidine monophosphate (OMP). This chain is Orotate phosphoribosyltransferase, found in Escherichia coli O157:H7.